Here is a 443-residue protein sequence, read N- to C-terminus: Protein SCAR (443 aa).

Residues Met-1–Thr-96 are interaction with brk1 and abiA. Residues Val-166–Lys-201 are a coiled coil. Disordered stretches follow at residues Ala-176–Val-197 and Ile-220–Leu-386. Positions Gln-178–Gly-192 are enriched in basic residues. Over residues Asn-221–Asn-252 the composition is skewed to polar residues. 2 stretches are compositionally biased toward low complexity: residues Ser-263–Tyr-277 and Asn-285–Asn-305. The segment covering Thr-306–Met-323 has biased composition (pro residues). The segment covering Gln-324–Asn-338 has biased composition (polar residues). Residues Pro-346–Met-365 show a composition bias toward pro residues. The region spanning Ala-382 to Ala-399 is the WH2 domain.

The protein belongs to the SCAR/WAVE family. In terms of assembly, part of a Scar/WAVE complex containing brk1, scrA, abiA, pirA and napA. Interacts with brk1 and abiA.

It is found in the cytoplasm. It localises to the cytoskeleton. The protein localises to the cell projection. The protein resides in the pseudopodium tip. Its subcellular location is the filopodium tip. Its function is as follows. Involved in regulation of actin and microtubule organization. Regulates phagocytosis and macropinocytosis. This chain is Protein SCAR (scrA), found in Dictyostelium discoideum (Social amoeba).